The following is a 312-amino-acid chain: MATYLDFESKIEKIQHEIVSAHAIANLEAVEKYQKELEKEIEKTFGSLSDYQKLQLARHPDRPYSLDYIKLLMDDAYEIHGDRAFRDDPAILCYIGWIGGQKTMLIGEQKGRGVKNKIKRNFGMPNPEGYRKALRAVRLAEKFDIPVLMLIDTPGAYPGLGAEERGQSEAIARNLFEFSATKVPMISIVIGEGGSGGALAIGVADKLAMLRYSVFAVISPEGCSAILWNDPSKVETATKALKITPSDLLEHKLVDDVLDEPLIGAHRDKVTTAEAIKTYFLESVKALRELSLDEMLDQRYKRLTAVGAYSEK.

Positions 36 to 286 (ELEKEIEKTF…KTYFLESVKA (251 aa)) constitute a CoA carboxyltransferase C-terminal domain.

Belongs to the AccA family. Acetyl-CoA carboxylase is a heterohexamer composed of biotin carboxyl carrier protein (AccB), biotin carboxylase (AccC) and two subunits each of ACCase subunit alpha (AccA) and ACCase subunit beta (AccD).

The protein resides in the cytoplasm. The catalysed reaction is N(6)-carboxybiotinyl-L-lysyl-[protein] + acetyl-CoA = N(6)-biotinyl-L-lysyl-[protein] + malonyl-CoA. The protein operates within lipid metabolism; malonyl-CoA biosynthesis; malonyl-CoA from acetyl-CoA: step 1/1. Its function is as follows. Component of the acetyl coenzyme A carboxylase (ACC) complex. First, biotin carboxylase catalyzes the carboxylation of biotin on its carrier protein (BCCP) and then the CO(2) group is transferred by the carboxyltransferase to acetyl-CoA to form malonyl-CoA. The polypeptide is Acetyl-coenzyme A carboxylase carboxyl transferase subunit alpha (Sulfurovum sp. (strain NBC37-1)).